A 361-amino-acid chain; its full sequence is Chorismate synthase (361 aa).

Arginine 48 contacts NADP(+). FMN-binding positions include 126 to 128, glycine 286, 301 to 305, and arginine 328; these read RFS and KPTPS.

Belongs to the chorismate synthase family. Requires FMNH2 as cofactor.

The enzyme catalyses 5-O-(1-carboxyvinyl)-3-phosphoshikimate = chorismate + phosphate. It functions in the pathway metabolic intermediate biosynthesis; chorismate biosynthesis; chorismate from D-erythrose 4-phosphate and phosphoenolpyruvate: step 7/7. Catalyzes the anti-1,4-elimination of the C-3 phosphate and the C-6 proR hydrogen from 5-enolpyruvylshikimate-3-phosphate (EPSP) to yield chorismate, which is the branch point compound that serves as the starting substrate for the three terminal pathways of aromatic amino acid biosynthesis. This reaction introduces a second double bond into the aromatic ring system. This is Chorismate synthase from Korarchaeum cryptofilum (strain OPF8).